Consider the following 432-residue polypeptide: Putative transferase At1g60990, chloroplastic (432 aa).

Residues 1 to 57 (MNLLQSCKDMAMMMRIDSVSHITNTALLPCLYNGTVLRRRSLSLRKCGFRERKFQLR) constitute a chloroplast transit peptide.

The protein belongs to the GcvT family. Expressed in young leaves (at protein level).

Its subcellular location is the plastid. The protein resides in the chloroplast. Functionally, folate-dependent protein involved in Fe/S cluster biogenesis. Functionally complements an E.coli mutant defective in ygfZ. This chain is Putative transferase At1g60990, chloroplastic, found in Arabidopsis thaliana (Mouse-ear cress).